We begin with the raw amino-acid sequence, 222 residues long: Large ribosomal subunit protein mL64 (222 aa).

Disordered stretches follow at residues 19 to 46 and 188 to 222; these read APGS…EDLL and KRLK…APSS. The span at 25-36 shows a compositional bias: basic residues; it reads YRARPPPRRRPG. Residues 99–212 are a coiled coil; it reads MQESLRVKQL…AAALAAAVAQ (114 aa). The Nuclear localization signal motif lies at 184-200; it reads KKERKRLKEEKQKRKKE. Low complexity predominate over residues 203-212; that stretch reads AAALAAAVAQ.

It belongs to the mitochondrion-specific ribosomal protein mL64 family. In terms of assembly, component of the mitochondrial large ribosomal subunit (mt-LSU). Mature mammalian 55S mitochondrial ribosomes consist of a small (28S) and a large (39S) subunit. The 28S small subunit contains a 12S ribosomal RNA (12S mt-rRNA) and 30 different proteins. The 39S large subunit contains a 16S rRNA (16S mt-rRNA), a copy of mitochondrial valine transfer RNA (mt-tRNA(Val)), which plays an integral structural role, and 52 different proteins. Interacts with GADD45A, GADD45B and GADD45G. Interacts with NR4A1 via the NR4A1 AB domain. Interacts with ATAD3A and ATAD3B. As to quaternary structure, (Microbial infection) Interacts with the human papilloma virus type 16 (HPV 16) minor capsid protein L2. As to expression, widely expressed. Highly expressed in the thyroid gland, heart, lymph nodes, trachea and adrenal tissues. Expressed at lower level in liver skeletal muscle, kidney, pancreas, testis, ovary and stomach. Barely detectable in adrenal adenoma and papillary thyroid cancer.

The protein resides in the mitochondrion. It is found in the nucleus. Functionally, acts as a negative regulator of G1 to S cell cycle phase progression by inhibiting cyclin-dependent kinases. Inhibitory effects are additive with GADD45 proteins but also occur in the absence of GADD45 proteins. Acts as a repressor of the orphan nuclear receptor NR4A1 by inhibiting AB domain-mediated transcriptional activity. May be involved in the hormone-mediated regulation of NR4A1 transcriptional activity. May play a role in mitochondrial protein synthesis. The protein is Large ribosomal subunit protein mL64 (GADD45GIP1) of Homo sapiens (Human).